A 312-amino-acid polypeptide reads, in one-letter code: tRNA-cytidine(32) 2-sulfurtransferase (312 aa).

The PP-loop motif signature appears at 48–53 (SGGKDS). Cys123, Cys126, and Cys214 together coordinate [4Fe-4S] cluster.

The protein belongs to the TtcA family. In terms of assembly, homodimer. Mg(2+) serves as cofactor. It depends on [4Fe-4S] cluster as a cofactor.

Its subcellular location is the cytoplasm. It carries out the reaction cytidine(32) in tRNA + S-sulfanyl-L-cysteinyl-[cysteine desulfurase] + AH2 + ATP = 2-thiocytidine(32) in tRNA + L-cysteinyl-[cysteine desulfurase] + A + AMP + diphosphate + H(+). It functions in the pathway tRNA modification. Functionally, catalyzes the ATP-dependent 2-thiolation of cytidine in position 32 of tRNA, to form 2-thiocytidine (s(2)C32). The sulfur atoms are provided by the cysteine/cysteine desulfurase (IscS) system. The protein is tRNA-cytidine(32) 2-sulfurtransferase of Mannheimia succiniciproducens (strain KCTC 0769BP / MBEL55E).